A 692-amino-acid polypeptide reads, in one-letter code: Elongation factor G (692 aa).

The 275-residue stretch at Glu8–Leu282 folds into the tr-type G domain. GTP is bound by residues Ala17–Thr24, Asp81–His85, and Asn135–Asp138.

The protein belongs to the TRAFAC class translation factor GTPase superfamily. Classic translation factor GTPase family. EF-G/EF-2 subfamily.

It is found in the cytoplasm. Functionally, catalyzes the GTP-dependent ribosomal translocation step during translation elongation. During this step, the ribosome changes from the pre-translocational (PRE) to the post-translocational (POST) state as the newly formed A-site-bound peptidyl-tRNA and P-site-bound deacylated tRNA move to the P and E sites, respectively. Catalyzes the coordinated movement of the two tRNA molecules, the mRNA and conformational changes in the ribosome. The protein is Elongation factor G of Bacillus cereus (strain ATCC 14579 / DSM 31 / CCUG 7414 / JCM 2152 / NBRC 15305 / NCIMB 9373 / NCTC 2599 / NRRL B-3711).